The following is a 755-amino-acid chain: Cellulose synthase-like protein B4 (755 aa).

The next 2 membrane-spanning stretches (helical) occupy residues 24-44 (AVDL…ILHV) and 49-69 (TVWI…LLIT). Active-site residues include aspartate 136 and aspartate 461. A run of 6 helical transmembrane segments spans residues 533 to 556 (AYLY…LPAY), 569 to 589 (VYLG…LWEF), 615 to 635 (LFSV…VFIV), 674 to 694 (FLPG…CLVG), 702 to 722 (GSGL…LPFL), and 733 to 753 (IPFS…VLSV).

The protein belongs to the glycosyltransferase 2 family. Plant cellulose synthase-like B subfamily.

Its subcellular location is the golgi apparatus membrane. Its function is as follows. Thought to be a Golgi-localized beta-glycan synthase that polymerize the backbones of noncellulosic polysaccharides (hemicelluloses) of plant cell wall. In Arabidopsis thaliana (Mouse-ear cress), this protein is Cellulose synthase-like protein B4 (CSLB4).